Reading from the N-terminus, the 130-residue chain is Type VII secretion system extracellular protein C (130 aa).

The protein belongs to the EsxC family. In terms of assembly, forms both homodimers and heterodimers with EsxA. Homodimerization is calcium-dependent.

The protein localises to the secreted. In terms of biological role, implements its pathogenic function during infection. The protein is Type VII secretion system extracellular protein C of Staphylococcus aureus (strain Mu50 / ATCC 700699).